The sequence spans 284 residues: Bifunctional protein FolD 2 (284 aa).

NADP(+)-binding positions include 164 to 166 (GRG), serine 189, and isoleucine 230.

It belongs to the tetrahydrofolate dehydrogenase/cyclohydrolase family. As to quaternary structure, homodimer.

It carries out the reaction (6R)-5,10-methylene-5,6,7,8-tetrahydrofolate + NADP(+) = (6R)-5,10-methenyltetrahydrofolate + NADPH. It catalyses the reaction (6R)-5,10-methenyltetrahydrofolate + H2O = (6R)-10-formyltetrahydrofolate + H(+). It functions in the pathway one-carbon metabolism; tetrahydrofolate interconversion. Its function is as follows. Catalyzes the oxidation of 5,10-methylenetetrahydrofolate to 5,10-methenyltetrahydrofolate and then the hydrolysis of 5,10-methenyltetrahydrofolate to 10-formyltetrahydrofolate. This Desulfitobacterium hafniense (strain Y51) protein is Bifunctional protein FolD 2.